The sequence spans 162 residues: Protein-export protein SecB (162 aa).

The protein belongs to the SecB family. Homotetramer, a dimer of dimers. One homotetramer interacts with 1 SecA dimer.

Its subcellular location is the cytoplasm. Functionally, one of the proteins required for the normal export of preproteins out of the cell cytoplasm. It is a molecular chaperone that binds to a subset of precursor proteins, maintaining them in a translocation-competent state. It also specifically binds to its receptor SecA. The protein is Protein-export protein SecB of Pseudomonas syringae pv. syringae (strain B728a).